The chain runs to 447 residues: tRNA-2-methylthio-N(6)-dimethylallyladenosine synthase (447 aa).

In terms of domain architecture, MTTase N-terminal spans 3 to 120 (KKLYIKTNGC…LPALLNERLE (118 aa)). The [4Fe-4S] cluster site is built by Cys12, Cys49, Cys83, Cys157, Cys161, and Cys164. Residues 143 to 375 (RAEGPTAFVS…QNRLLMNAAR (233 aa)) enclose the Radical SAM core domain. A TRAM domain is found at 378-441 (ESMIGSKQKI…PNSLRGRLLE (64 aa)).

This sequence belongs to the methylthiotransferase family. MiaB subfamily. Monomer. The cofactor is [4Fe-4S] cluster.

It localises to the cytoplasm. The catalysed reaction is N(6)-dimethylallyladenosine(37) in tRNA + (sulfur carrier)-SH + AH2 + 2 S-adenosyl-L-methionine = 2-methylsulfanyl-N(6)-dimethylallyladenosine(37) in tRNA + (sulfur carrier)-H + 5'-deoxyadenosine + L-methionine + A + S-adenosyl-L-homocysteine + 2 H(+). Catalyzes the methylthiolation of N6-(dimethylallyl)adenosine (i(6)A), leading to the formation of 2-methylthio-N6-(dimethylallyl)adenosine (ms(2)i(6)A) at position 37 in tRNAs that read codons beginning with uridine. This Legionella pneumophila (strain Paris) protein is tRNA-2-methylthio-N(6)-dimethylallyladenosine synthase.